The chain runs to 99 residues: Putative pterin-4-alpha-carbinolamine dehydratase (99 aa).

It belongs to the pterin-4-alpha-carbinolamine dehydratase family.

The enzyme catalyses (4aS,6R)-4a-hydroxy-L-erythro-5,6,7,8-tetrahydrobiopterin = (6R)-L-erythro-6,7-dihydrobiopterin + H2O. In Aquifex aeolicus (strain VF5), this protein is Putative pterin-4-alpha-carbinolamine dehydratase.